The sequence spans 393 residues: Phosphoglycerate kinase (393 aa).

Substrate is bound by residues 21–23 (DFN), Arg37, 60–63 (HLGR), Arg119, and Arg152. ATP is bound by residues Lys202, Glu323, and 349–352 (GGDT).

Belongs to the phosphoglycerate kinase family. In terms of assembly, monomer.

Its subcellular location is the cytoplasm. The catalysed reaction is (2R)-3-phosphoglycerate + ATP = (2R)-3-phospho-glyceroyl phosphate + ADP. The protein operates within carbohydrate degradation; glycolysis; pyruvate from D-glyceraldehyde 3-phosphate: step 2/5. The sequence is that of Phosphoglycerate kinase from Desulforudis audaxviator (strain MP104C).